A 632-amino-acid polypeptide reads, in one-letter code: Spike glycoprotein (632 aa).

The first 17 residues, 1–17, serve as a signal peptide directing secretion; that stretch reads MSHIMNLLVISFVLAGS. Residues N93, N385, N501, N512, and N541 are each glycosylated (N-linked (GlcNAc...) asparagine; by host). A helical transmembrane segment spans residues 560–578; that stretch reads AVIIVASLAICYIVLSVLW.

Belongs to the nucleorhabdovirus glycoprotein family.

Its subcellular location is the virion membrane. Its function is as follows. This protein forms spikes on the surface of the virion. It is responsible both for the binding of the virus to susceptible host cells and for inducing the uptake of the virus by the cell. The interaction between the internal components of the virion and the portion of the glycoprotein exposed on the cytoplasmic face of the plasma membrane probably directs envelopment and virus budding. The chain is Spike glycoprotein (G) from Aphis (Hairy beggarticks).